Here is a 440-residue protein sequence, read N- to C-terminus: Protein root UVB sensitive 3 (440 aa).

3 helical membrane-spanning segments follow: residues 109–129 (IGATFQWFLRDFTGMLGGILF), 154–174 (IGMLMDLLSPLFPSAFIVVVC), and 232–252 (FTSGNPMAIWLSFLSLTVFHM).

The protein belongs to the RUS1 family.

The protein localises to the membrane. In Arabidopsis thaliana (Mouse-ear cress), this protein is Protein root UVB sensitive 3.